A 286-amino-acid polypeptide reads, in one-letter code: Small ribosomal subunit protein uS2 (286 aa).

The interval 213–286 (EEQAQNNKWA…GAQEGGEWGS (74 aa)) is disordered. Over residues 227–241 (SPALSAAVPSSAAPV) the composition is skewed to low complexity. Polar residues predominate over residues 244-270 (WSSSPSKETTEWGASNTAAAAKSSWSN). Gly residues predominate over residues 274 to 286 (GEWGAQEGGEWGS).

The protein belongs to the universal ribosomal protein uS2 family. As to quaternary structure, component of the small ribosomal subunit. Mature ribosomes consist of a small (40S) and a large (60S) subunit. The 40S subunit contains about 33 different proteins and 1 molecule of RNA (18S). The 60S subunit contains about 49 different proteins and 3 molecules of RNA (28S, 5.8S and 5S). Interacts with ribosomal protein S21.

It is found in the cytoplasm. Required for the assembly and/or stability of the 40S ribosomal subunit. Required for the processing of the 20S rRNA-precursor to mature 18S rRNA in a late step of the maturation of 40S ribosomal subunits. The polypeptide is Small ribosomal subunit protein uS2 (Trichoplax adhaerens (Trichoplax reptans)).